The chain runs to 520 residues: 3-phosphoshikimate 1-carboxyvinyltransferase, chloroplastic (520 aa).

The transit peptide at 1–76 directs the protein to the chloroplast; it reads MAQISSMAQG…RISASVATAE (76 aa). 3-phosphoshikimate-binding residues include lysine 99, serine 100, and arginine 104. Lysine 99 is a phosphoenolpyruvate binding site. Phosphoenolpyruvate is bound by residues glycine 177 and arginine 207. 3-phosphoshikimate is bound by residues serine 254, serine 255, glutamine 256, serine 282, aspartate 407, and lysine 434. Glutamine 256 contacts phosphoenolpyruvate. Aspartate 407 (proton acceptor) is an active-site residue. Phosphoenolpyruvate contacts are provided by arginine 438, arginine 480, and lysine 505.

The protein belongs to the EPSP synthase family.

Its subcellular location is the plastid. It localises to the chloroplast. The catalysed reaction is 3-phosphoshikimate + phosphoenolpyruvate = 5-O-(1-carboxyvinyl)-3-phosphoshikimate + phosphate. It participates in metabolic intermediate biosynthesis; chorismate biosynthesis; chorismate from D-erythrose 4-phosphate and phosphoenolpyruvate: step 6/7. Catalyzes the transfer of the enolpyruvyl moiety of phosphoenolpyruvate (PEP) to the 5-hydroxyl of shikimate-3-phosphate (S3P) to produce enolpyruvyl shikimate-3-phosphate and inorganic phosphate. The protein is 3-phosphoshikimate 1-carboxyvinyltransferase, chloroplastic of Solanum lycopersicum (Tomato).